The sequence spans 158 residues: RNA pyrophosphohydrolase (158 aa).

A Nudix hydrolase domain is found at 8 to 152 (PYRPCAGVML…KRALYRGLIE (145 aa)). The Nudix box signature appears at 42 to 63 (GGIDEGEDAEKAAIRELGEETG).

Belongs to the Nudix hydrolase family. RppH subfamily. A divalent metal cation is required as a cofactor.

Functionally, accelerates the degradation of transcripts by removing pyrophosphate from the 5'-end of triphosphorylated RNA, leading to a more labile monophosphorylated state that can stimulate subsequent ribonuclease cleavage. This chain is RNA pyrophosphohydrolase, found in Sphingopyxis alaskensis (strain DSM 13593 / LMG 18877 / RB2256) (Sphingomonas alaskensis).